The chain runs to 186 residues: Nucleoside diphosphate kinase, mitochondrial (186 aa).

Residues 1–32 (MGSLFGRVAALRALLCGPRFQCLLVRPSSGGP) constitute a mitochondrion transit peptide. ATP is bound by residues Lys44, Phe92, Arg120, Thr126, Arg137, and Asn147. The active-site Pros-phosphohistidine intermediate is the His150.

This sequence belongs to the NDK family. Homohexamer. Interacts with OPA1. Interacts with CAPN8. Mg(2+) serves as cofactor. In terms of tissue distribution, expressed in the base region of the oxyntic and pyloric mucosae.

Its subcellular location is the mitochondrion intermembrane space. It localises to the mitochondrion matrix. It carries out the reaction a 2'-deoxyribonucleoside 5'-diphosphate + ATP = a 2'-deoxyribonucleoside 5'-triphosphate + ADP. The enzyme catalyses a ribonucleoside 5'-diphosphate + ATP = a ribonucleoside 5'-triphosphate + ADP. Its function is as follows. Major role in the synthesis of nucleoside triphosphates other than ATP. The ATP gamma phosphate is transferred to the NDP beta phosphate via a ping-pong mechanism, using a phosphorylated active-site intermediate. Through the catalyzed exchange of gamma-phosphate between di- and triphosphonucleosides participates in regulation of intracellular nucleotide homeostasis. Binds to anionic phospholipids, predominantly to cardiolipin; the binding inhibits its phosphotransfer activity. Acts as a mitochondria-specific NDK; its association with cardiolipin-containing mitochondrial inner membrane is coupled to respiration suggesting that ADP locally regenerated in the mitochondrion innermembrane space by its activity is directly taken up via ANT ADP/ATP translocase into the matrix space to stimulate respiratory ATP regeneration. Proposed to increase GTP-loading on dynamin-related GTPase OPA1 in mitochondria. In vitro can induce liposome cross-linking suggesting that it can cross-link inner and outer membranes to form contact sites, and promotes intermembrane migration of anionic phosphoplipids. Promotes the redistribution of cardiolipin between the mitochondrial inner membrane and outer membrane which is implicated in pro-apoptotic signaling. The protein is Nucleoside diphosphate kinase, mitochondrial (Nme4) of Mus musculus (Mouse).